Here is a 314-residue protein sequence, read N- to C-terminus: Acetaldehyde dehydrogenase 1 (314 aa).

15-18 (SGNI) contacts NAD(+). Cys133 serves as the catalytic Acyl-thioester intermediate. NAD(+) is bound by residues 164-172 (SAGPGTRAN) and Asn291.

The protein belongs to the acetaldehyde dehydrogenase family.

The enzyme catalyses acetaldehyde + NAD(+) + CoA = acetyl-CoA + NADH + H(+). The chain is Acetaldehyde dehydrogenase 1 from Paraburkholderia xenovorans (strain LB400).